We begin with the raw amino-acid sequence, 61 residues long: Tryptophyllin-1 (61 aa).

The first 22 residues, 1–22, serve as a signal peptide directing secretion; it reads MDILKKSLFLALFLGLVSISFC. Residues 23-53 constitute a propeptide that is removed on maturation; sequence DEEKRQDDDESNESEEKKEIHEEGSQEERRE. The interval 24–61 is disordered; it reads EEKRQDDDESNESEEKKEIHEEGSQEERREKPPPWVPV. Residues 36–55 are compositionally biased toward basic and acidic residues; that stretch reads SEEKKEIHEEGSQEERREKP.

In terms of tissue distribution, expressed by the skin glands.

The protein localises to the secreted. In terms of biological role, the synthetic peptide inhibits bradykinin-induced relaxation of rat tail artery smooth muscle, and also has anti-proliferative effects on the human prostate cancer cell lines LNCaP, PC3 and DU145. This Phyllomedusa sauvagei (Sauvage's leaf frog) protein is Tryptophyllin-1.